The sequence spans 391 residues: 5-amino-6-(D-ribitylamino)uracil--L-tyrosine 4-hydroxyphenyl transferase (391 aa).

The Radical SAM core domain maps to 55–302 (VTYVINRNIN…GAVARIYLGN (248 aa)). The [4Fe-4S] cluster site is built by Cys69, Cys73, and Cys76.

This sequence belongs to the radical SAM superfamily. CofH family. Consists of two subunits, CofG and CofH. Requires [4Fe-4S] cluster as cofactor.

It carries out the reaction 5-amino-6-(D-ribitylamino)uracil + L-tyrosine + S-adenosyl-L-methionine = 5-amino-5-(4-hydroxybenzyl)-6-(D-ribitylimino)-5,6-dihydrouracil + 2-iminoacetate + 5'-deoxyadenosine + L-methionine + H(+). It participates in cofactor biosynthesis; coenzyme F0 biosynthesis. Catalyzes the radical-mediated synthesis of 5-amino-5-(4-hydroxybenzyl)-6-(D-ribitylimino)-5,6-dihydrouracil from 5-amino-6-(D-ribitylamino)uracil and L-tyrosine. This chain is 5-amino-6-(D-ribitylamino)uracil--L-tyrosine 4-hydroxyphenyl transferase, found in Trichormus variabilis (strain ATCC 29413 / PCC 7937) (Anabaena variabilis).